The chain runs to 358 residues: Myb family transcription factor APL (358 aa).

The HTH myb-type domain maps to T31 to Q91. The H-T-H motif DNA-binding region spans P62–R87. A coiled-coil region spans residues R125–Q145. The LHEQLE motif lies at L138–E143. The interval R313–G358 is disordered.

It belongs to the MYB-CC family. Expressed in shoots and roots, specifically in the developing protophloem sieve elements. Detected in phloem and/or cambium. Expressed in the phloem tissues of various organs, including leaves and cotyledons, during vegetative growth.

It is found in the nucleus. Functionally, transcription factor required for phloem identity. Has a dual role both in promoting phloem differentiation and in repressing xylem differentiation during vascular development. Regulates the expression of the transcription factor NAC045 (AC A4VCM0). May activate the transcription of specific genes involved in phosphate uptake or assimilation. Promotes flowering through transcriptional activation of both FT and its transport machinery component, FTIP1. The polypeptide is Myb family transcription factor APL (Arabidopsis thaliana (Mouse-ear cress)).